The primary structure comprises 163 residues: MRIALYPGTFDPITLGHQEIIERGSFLCDRLYIGVAVGHHKKTLFSLSERCELVNGVLADLTLHCPVEVVPYCGLLATLYQKLHANILIRGLRSAGDFEYERQLFYANQHLNAQIETVFLLPAPQYSFISSTLVRELAQLNGALDGLVHDIVKKKLRLNSGGQ.

T9 serves as a coordination point for substrate. ATP-binding positions include 9-10 (TF) and H17. Substrate is bound by residues K41, L76, and R90. Residues 91 to 93 (GLR), E101, and 126 to 132 (YSFISST) each bind ATP.

The protein belongs to the bacterial CoaD family. Homohexamer. Requires Mg(2+) as cofactor.

Its subcellular location is the cytoplasm. The enzyme catalyses (R)-4'-phosphopantetheine + ATP + H(+) = 3'-dephospho-CoA + diphosphate. Its pathway is cofactor biosynthesis; coenzyme A biosynthesis; CoA from (R)-pantothenate: step 4/5. Its function is as follows. Reversibly transfers an adenylyl group from ATP to 4'-phosphopantetheine, yielding dephospho-CoA (dPCoA) and pyrophosphate. The polypeptide is Phosphopantetheine adenylyltransferase (Dichelobacter nodosus (strain VCS1703A)).